Consider the following 124-residue polypeptide: 14 kDa phosphohistidine phosphatase (124 aa).

A substrate-binding site is contributed by K20. The active-site Proton acceptor is H52. 93–95 serves as a coordination point for substrate; it reads SMG.

The protein belongs to the janus family. As to quaternary structure, monomer.

It localises to the cytoplasm. The enzyme catalyses N(pros)-phospho-L-histidyl-[protein] + H2O = L-histidyl-[protein] + phosphate. The catalysed reaction is N(tele)-phospho-L-histidyl-[protein] + H2O = L-histidyl-[protein] + phosphate. In terms of biological role, exhibits phosphohistidine phosphatase activity. This chain is 14 kDa phosphohistidine phosphatase (Phpt1), found in Mus musculus (Mouse).